Here is a 455-residue protein sequence, read N- to C-terminus: Exodeoxyribonuclease 7 large subunit (455 aa).

Belongs to the XseA family. As to quaternary structure, heterooligomer composed of large and small subunits.

It localises to the cytoplasm. The enzyme catalyses Exonucleolytic cleavage in either 5'- to 3'- or 3'- to 5'-direction to yield nucleoside 5'-phosphates.. Functionally, bidirectionally degrades single-stranded DNA into large acid-insoluble oligonucleotides, which are then degraded further into small acid-soluble oligonucleotides. The polypeptide is Exodeoxyribonuclease 7 large subunit (Escherichia coli O7:K1 (strain IAI39 / ExPEC)).